A 612-amino-acid chain; its full sequence is Probable Xaa-Pro aminopeptidase P (612 aa).

Asp-409, Asp-420, Glu-518, and Glu-532 together coordinate Mn(2+).

It belongs to the peptidase M24B family. Mn(2+) serves as cofactor.

It catalyses the reaction Release of any N-terminal amino acid, including proline, that is linked to proline, even from a dipeptide or tripeptide.. Its function is as follows. Catalyzes the removal of a penultimate prolyl residue from the N-termini of peptides. The protein is Probable Xaa-Pro aminopeptidase P (AMPP) of Verticillium alfalfae (strain VaMs.102 / ATCC MYA-4576 / FGSC 10136) (Verticillium wilt of alfalfa).